The sequence spans 204 residues: Putative 3-methyladenine DNA glycosylase (204 aa).

It belongs to the DNA glycosylase MPG family.

This Bacillus cytotoxicus (strain DSM 22905 / CIP 110041 / 391-98 / NVH 391-98) protein is Putative 3-methyladenine DNA glycosylase.